The chain runs to 449 residues: Hyaluronidase-1 (449 aa).

The signal sequence occupies residues 1 to 39; the sequence is MKPFSPEVSPDPCPATAAHLLRTYTLFLTLLELAQGCRG. Intrachain disulfides connect C58/C348 and C222/C236. N85 and N114 each carry an N-linked (GlcNAc...) asparagine glycan. The active-site Proton donor is E146. 3 N-linked (GlcNAc...) asparagine glycosylation sites follow: N231, N252, and N365. Intrachain disulfides connect C373–C384, C378–C433, and C435–C444. In terms of domain architecture, EGF-like spans 433 to 444; it reads CRCYRGWSGEWC.

Belongs to the glycosyl hydrolase 56 family.

It localises to the secreted. Its subcellular location is the lysosome. The catalysed reaction is Random hydrolysis of (1-&gt;4)-linkages between N-acetyl-beta-D-glucosamine and D-glucuronate residues in hyaluronate.. Its function is as follows. May have a role in promoting tumor progression. May block the TGFB1-enhanced cell growth. Overexpression of HYAL1 suppressed the growth rate of colon carcinoma cell tumors in an experimental model. This is Hyaluronidase-1 (Hyal1) from Rattus norvegicus (Rat).